A 161-amino-acid chain; its full sequence is Ubiquitin-conjugating enzyme E2Q-like protein 1 (161 aa).

The region spanning 1–154 is the UBC core domain; sequence MKELQDIARL…VKTHEKYGWV (154 aa). C88 serves as the catalytic Glycyl thioester intermediate.

This sequence belongs to the ubiquitin-conjugating enzyme family. Interacts with FBXW7.

It localises to the nucleus. The catalysed reaction is S-ubiquitinyl-[E1 ubiquitin-activating enzyme]-L-cysteine + [E2 ubiquitin-conjugating enzyme]-L-cysteine = [E1 ubiquitin-activating enzyme]-L-cysteine + S-ubiquitinyl-[E2 ubiquitin-conjugating enzyme]-L-cysteine.. It functions in the pathway protein modification; protein ubiquitination. Functionally, probable E2 ubiquitin-protein ligase that catalyzes the covalent attachment of ubiquitin to target proteins. May facilitate the monoubiquitination and degradation of MTOR and CCNE1 through interaction with FBXW7. This is Ubiquitin-conjugating enzyme E2Q-like protein 1 (Ube2ql1) from Mus musculus (Mouse).